Consider the following 429-residue polypeptide: Gamma-glutamyl phosphate reductase (429 aa).

The protein belongs to the gamma-glutamyl phosphate reductase family.

The protein localises to the cytoplasm. The enzyme catalyses L-glutamate 5-semialdehyde + phosphate + NADP(+) = L-glutamyl 5-phosphate + NADPH + H(+). The protein operates within amino-acid biosynthesis; L-proline biosynthesis; L-glutamate 5-semialdehyde from L-glutamate: step 2/2. Its function is as follows. Catalyzes the NADPH-dependent reduction of L-glutamate 5-phosphate into L-glutamate 5-semialdehyde and phosphate. The product spontaneously undergoes cyclization to form 1-pyrroline-5-carboxylate. This chain is Gamma-glutamyl phosphate reductase, found in Methylibium petroleiphilum (strain ATCC BAA-1232 / LMG 22953 / PM1).